A 426-amino-acid chain; its full sequence is Cephalotocin receptor 2 (426 aa).

The Extracellular segment spans residues 1–51 (MYQAMEVESTSPSGFFLDFYTQSTIPTTDFLNNTNSSHPIRDEKLVKIEIA). Asn32 and Asn35 each carry an N-linked (GlcNAc...) asparagine glycan. Residues 52-72 (VLGTCFTLAIINNLCVLLVLL) form a helical membrane-spanning segment. The Cytoplasmic portion of the chain corresponds to 73–84 (WRRKKVRRMQMF). Residues 85–105 (ILHLSIADLIVAFFNILPQLI) traverse the membrane as a helical segment. Residues 106 to 120 (WDITFRFMAGDAMCR) lie on the Extracellular side of the membrane. Cys119 and Cys198 are disulfide-bonded. The helical transmembrane segment at 121–141 (FIKYAQMFSLYLSTYILIMTA) threads the bilayer. The Cytoplasmic portion of the chain corresponds to 142-165 (VDRYRAICHPLSNQTWTPCMVYCK). The helical transmembrane segment at 166–186 (IFIAYAIATIFSIPQAILFQM) threads the bilayer. Over 187–208 (QEVNEGSGIYDCWVHFEPAWVL) the chain is Extracellular. A helical membrane pass occupies residues 209–229 (TAYALYIFFALYLIPILILFF). Residues 230–288 (TYGSICYTIWAKYRHAIKTKKDANTRYPQRRKKKGVILRTHSVHGFSKAKLNSVKLTFA) lie on the Cytoplasmic side of the membrane. Residues 289-309 (VIVTYIICWSPFFVSQIWWLF) traverse the membrane as a helical segment. Residues 310–319 (DETVVGNAGV) lie on the Extracellular side of the membrane. A helical membrane pass occupies residues 320 to 340 (VVILLMACLNSCTNPWIYLIF). The Cytoplasmic portion of the chain corresponds to 341–426 (NRNYISNVLP…DQFIYSDKTT (86 aa)). The disordered stretch occupies residues 373-426 (GSVRRDSRKTSDPKRISESRRISDARRISGKTQKNNSSSPRKTSDQFIYSDKTT). The span at 375-399 (VRRDSRKTSDPKRISESRRISDARR) shows a compositional bias: basic and acidic residues. Residues 402–426 (GKTQKNNSSSPRKTSDQFIYSDKTT) show a composition bias toward polar residues.

Belongs to the G-protein coupled receptor 1 family. Vasopressin/oxytocin receptor subfamily. Present in various peripheral tissues with highest expression in branchia and vas deferens. Very low expression detected in nervous system.

Its subcellular location is the cell membrane. Functionally, acts as a receptor for cephalotocin. The chain is Cephalotocin receptor 2 from Octopus vulgaris (Common octopus).